We begin with the raw amino-acid sequence, 373 residues long: MTQPIVRSIPLHVVSNDHPSSSPLQPGVKQSGEDKIGRSPVQFADVPVLRKPSWIRVRIPSGNAVQSLKAKLRENRLVTVCEEAACPNIHECFSHGTATFMILGEVCTRRCSFCDVAHGRPKPPDPEEPISLARTVAEMGLKYVVVTSVDRDDLRDGGAQHFVDCIAAIRQSAPQTRIEILTPDFRGKGRMDRALDILAACPPDVFNHNVETVPALYPNVRPGADYQWSLTLLKRFKAQHPQVPTKSGIMLGLGETLDQVQATLRDLRAHDVDMVTVGQYLQPTSHHHPVLRYWTPDEYKALEEYGMALGFSHVASGPMVRSSYHADHQAKEAGLGFNATVSLGSPAVSSTEHRERHTIASKSASKTESIPHR.

The disordered stretch occupies residues 12-36 (HVVSNDHPSSSPLQPGVKQSGEDKI). 7 residues coordinate [4Fe-4S] cluster: C81, C86, C92, C107, C111, C114, and S323. One can recognise a Radical SAM core domain in the interval 93-312 (FSHGTATFMI…EEYGMALGFS (220 aa)). The interval 346–373 (PAVSSTEHRERHTIASKSASKTESIPHR) is disordered. A compositionally biased stretch (polar residues) spans 360–373 (ASKSASKTESIPHR).

Belongs to the radical SAM superfamily. Lipoyl synthase family. Requires [4Fe-4S] cluster as cofactor.

It localises to the cytoplasm. The catalysed reaction is [[Fe-S] cluster scaffold protein carrying a second [4Fe-4S](2+) cluster] + N(6)-octanoyl-L-lysyl-[protein] + 2 oxidized [2Fe-2S]-[ferredoxin] + 2 S-adenosyl-L-methionine + 4 H(+) = [[Fe-S] cluster scaffold protein] + N(6)-[(R)-dihydrolipoyl]-L-lysyl-[protein] + 4 Fe(3+) + 2 hydrogen sulfide + 2 5'-deoxyadenosine + 2 L-methionine + 2 reduced [2Fe-2S]-[ferredoxin]. It functions in the pathway protein modification; protein lipoylation via endogenous pathway; protein N(6)-(lipoyl)lysine from octanoyl-[acyl-carrier-protein]: step 2/2. In terms of biological role, catalyzes the radical-mediated insertion of two sulfur atoms into the C-6 and C-8 positions of the octanoyl moiety bound to the lipoyl domains of lipoate-dependent enzymes, thereby converting the octanoylated domains into lipoylated derivatives. The sequence is that of Lipoyl synthase from Xylella fastidiosa (strain M12).